Here is a 251-residue protein sequence, read N- to C-terminus: Ubiquinone/menaquinone biosynthesis C-methyltransferase UbiE (251 aa).

S-adenosyl-L-methionine is bound by residues threonine 74, aspartate 95, 123–124 (NA), and serine 140.

It belongs to the class I-like SAM-binding methyltransferase superfamily. MenG/UbiE family.

The enzyme catalyses a 2-demethylmenaquinol + S-adenosyl-L-methionine = a menaquinol + S-adenosyl-L-homocysteine + H(+). The catalysed reaction is a 2-methoxy-6-(all-trans-polyprenyl)benzene-1,4-diol + S-adenosyl-L-methionine = a 5-methoxy-2-methyl-3-(all-trans-polyprenyl)benzene-1,4-diol + S-adenosyl-L-homocysteine + H(+). It participates in quinol/quinone metabolism; menaquinone biosynthesis; menaquinol from 1,4-dihydroxy-2-naphthoate: step 2/2. The protein operates within cofactor biosynthesis; ubiquinone biosynthesis. Methyltransferase required for the conversion of demethylmenaquinol (DMKH2) to menaquinol (MKH2) and the conversion of 2-polyprenyl-6-methoxy-1,4-benzoquinol (DDMQH2) to 2-polyprenyl-3-methyl-6-methoxy-1,4-benzoquinol (DMQH2). The polypeptide is Ubiquinone/menaquinone biosynthesis C-methyltransferase UbiE (Escherichia coli O1:K1 / APEC).